The following is a 358-amino-acid chain: Trace amine-associated receptor 7a (358 aa).

Residues 1–47 are Extracellular-facing; the sequence is MDKLVDHFLSDQSRTMNEDLFSATSTELCYENLNRSCVRSPYSPGPR. N34 carries an N-linked (GlcNAc...) asparagine glycan. 2 disulfide bridges follow: C37–C201 and C120–C205. Residues 48–68 form a helical membrane-spanning segment; sequence LILYAVFGFGAALAVCGNLLV. The Cytoplasmic portion of the chain corresponds to 69–83; the sequence is MTSILHFRQLHSPAN. Residues 84–104 form a helical membrane-spanning segment; sequence FLVASLACADFLVGLTVMPFS. The Extracellular segment spans residues 105–121; the sequence is TVRSVEGCWYFGESYCK. A helical transmembrane segment spans residues 122–143; sequence FHSCFEGSFCYSSIFHLCFISV. The Cytoplasmic portion of the chain corresponds to 144 to 166; sequence DRYIAVSDPLTYPTRFTASVSGK. The helical transmembrane segment at 167–187 threads the bilayer; sequence CITFSWLLSIIYSFSLLYTGA. Over 188 to 212 the chain is Extracellular; that stretch reads NEAGLEDLVSVLTCVGGCQIAVNQS. N-linked (GlcNAc...) asparagine glycosylation is present at N210. A helical membrane pass occupies residues 213–233; it reads WVFINFLLFLIPTLVMMTVYS. The Cytoplasmic segment spans residues 234-274; sequence KIFLIAKQQAQNIEKMSKQTARASESYKDRVAKRERKAAKT. The helical transmembrane segment at 275–295 threads the bilayer; that stretch reads LGIAVAAFLLSWLPYFIDSII. At 296 to 309 the chain is on the extracellular side; that stretch reads DAFLGFITPTYVYE. The helical transmembrane segment at 310–333 threads the bilayer; the sequence is ILVWIAYYNSAMNPLIYAFFYPWF. Residues 334–358 are Cytoplasmic-facing; the sequence is RKAIKLIVTGKILRENSSTTNLFPE.

It belongs to the G-protein coupled receptor 1 family. As to expression, specifically expressed in neurons of the olfactory epithelium.

The protein resides in the cell membrane. Olfactory receptor specific for N,N-dimethylalkylamines trace amines. Trace amine compounds are enriched in animal body fluids and act on trace amine-associated receptors (TAARs) to elicit both intraspecific and interspecific innate behaviors. Ligand-binding causes a conformation change that triggers signaling via G(s)-class of G alpha proteins (GNAL or GNAS). The protein is Trace amine-associated receptor 7a of Mus musculus (Mouse).